Consider the following 600-residue polypeptide: MSHQEGSTGGLPDLVTESLFSSPEEQSGVAAVTAASSDIEMAATEPSTGDGGDTRDGGFLNDASTENQNTDSESSSEDVELESMGEGLFGYPLVGEETEREEEEEEMEEEGEEEEQPRMCPRCGGTNHDQCLLDEDQALEEWISSETSALPRSRWQVLTALRQRQLGSSARFVYEACGARTFVQRFRLQYLLGSHAGSVSTIHFNQRGTRLASSGDDLRVIVWDWVRQKPVLNFESGHDINVIQAKFFPNCGDSTLAMCGHDGQVRVAELINASYCENTKRVAKHRGPAHELALEPDSPYKFLTSGEDAVVFTIDLRQDRPASKVVVTRENDKKVGLYTISMNPANIYQFAVGGHDQFVRIYDQRRIDKKENNGVLKKFTPHHLVYCDFPTNITCVVYSHDGTELLASYNDEDIYLFNSSLSDGAQYVKRYKGHRNNDTIKCVNFYGPRSEFVVSGSDCGHVFFWEKSSSQIIQFMEGDRGDIVNCLEPHPYLPVLATSGLDQHVRIWTPTAKTATELTGLKDVIKKNKQERDEDNLNYTDSFDNRMLRFFVRHLLQRAHQPGWRDHGAEFPDEEELDESSSTSDTSEEEGQDRVQCIPS.

A disordered region spans residues 1–122; that stretch reads MSHQEGSTGG…EEEQPRMCPR (122 aa). 2 stretches are compositionally biased toward acidic residues: residues 74–83 and 96–115; these read SSSEDVELES and EETEREEEEEEMEEEGEEEE. WD repeat units follow at residues 194-233, 237-278, 284-324, 332-372, 388-427, 435-475, and 479-518; these read SHAGSVSTIHFNQRGTRLASSGDDLRVIVWDWVRQKPVLN, GHDI…YCEN, KHRG…PASK, DKKV…KKEN, DFPTNITCVVYSHDGTELLASYNDEDIYLFNSSLSDGAQY, RNND…IIQF, and DRGDIVNCLEPHPYLPVLATSGLDQHVRIWTPTAKTATEL. The tract at residues 562 to 600 is disordered; sequence PGWRDHGAEFPDEEELDESSSTSDTSEEEGQDRVQCIPS.

The protein belongs to the WD repeat DCAF8 family.

This chain is DDB1- and CUL4-associated factor 8-like protein 1 (DCAF8L1), found in Homo sapiens (Human).